The primary structure comprises 103 residues: uncharacterized protein (103 aa).

This is an uncharacterized protein from Sulfolobus islandicus filamentous virus (isolate Iceland/Hveragerdi) (SIFV).